The primary structure comprises 413 residues: Elongation factor 1-alpha (413 aa).

One can recognise a tr-type G domain in the interval 5–211 (KEHINLAFIG…DNLAAPEKPV (207 aa)). The segment at 14-21 (GHVDHGKS) is G1. Residue 14-21 (GHVDHGKS) participates in GTP binding. S21 contacts Mg(2+). Positions 60–64 (GVTID) are G2. The segment at 81–84 (DCPG) is G3. GTP is bound by residues 81-85 (DCPGH) and 136-139 (NKID). The tract at residues 136 to 139 (NKID) is G4. The G5 stretch occupies residues 175 to 177 (SAF).

The protein belongs to the TRAFAC class translation factor GTPase superfamily. Classic translation factor GTPase family. EF-Tu/EF-1A subfamily.

It is found in the cytoplasm. The enzyme catalyses GTP + H2O = GDP + phosphate + H(+). GTP hydrolase that promotes the GTP-dependent binding of aminoacyl-tRNA to the A-site of ribosomes during protein biosynthesis. The polypeptide is Elongation factor 1-alpha (Methanobrevibacter smithii (strain ATCC 35061 / DSM 861 / OCM 144 / PS)).